A 354-amino-acid polypeptide reads, in one-letter code: Uroporphyrinogen decarboxylase (354 aa).

Residues 27 to 31 (RQAGR), phenylalanine 46, aspartate 77, tyrosine 154, threonine 209, and histidine 327 each bind substrate.

The protein belongs to the uroporphyrinogen decarboxylase family. As to quaternary structure, homodimer.

It localises to the cytoplasm. The enzyme catalyses uroporphyrinogen III + 4 H(+) = coproporphyrinogen III + 4 CO2. The protein operates within porphyrin-containing compound metabolism; protoporphyrin-IX biosynthesis; coproporphyrinogen-III from 5-aminolevulinate: step 4/4. Its function is as follows. Catalyzes the decarboxylation of four acetate groups of uroporphyrinogen-III to yield coproporphyrinogen-III. This is Uroporphyrinogen decarboxylase from Pseudomonas putida (strain ATCC 47054 / DSM 6125 / CFBP 8728 / NCIMB 11950 / KT2440).